A 379-amino-acid chain; its full sequence is ORC1-type DNA replication protein 2 (379 aa).

Residues 69–73 (TGKTT), Tyr-211, and Arg-223 contribute to the ATP site.

This sequence belongs to the CDC6/cdc18 family. Interacts with MCM. Post-translationally, autophosphorylated on a serine. Phosphorylation is inhibited by binding to MCM. Both single-stranded DNA and double-stranded DNA inhibit the phosphorylation reaction.

Its function is as follows. Involved in regulation of DNA replication. Dissociates the MCM complex and inhibits the MCM helicase activity, suggesting that it may function as a helicase loader. Binds to both specific and random double-stranded or single-stranded DNA. In Methanothermobacter thermautotrophicus (strain ATCC 29096 / DSM 1053 / JCM 10044 / NBRC 100330 / Delta H) (Methanobacterium thermoautotrophicum), this protein is ORC1-type DNA replication protein 2 (cdc6-2).